Reading from the N-terminus, the 200-residue chain is MQGFKQHTGLVVPLDAANVDTDAIIPKQFLQKVSRLGFGKHLFHDWRFLDDAGEQPNPEFVMNHARYQGASILLARENFGCGSSREHAPWALADYGIRAMIAPSFADIFYGNSINNQMVPVRLTEQEVDELFQYVQATEGAQIEVDLEALKVRANGKEYSFEIDDFRRHCLLNGLDHIGLTLQHEDKIAAFEADIPAFLR.

It belongs to the LeuD family. LeuD type 1 subfamily. As to quaternary structure, heterodimer of LeuC and LeuD.

The enzyme catalyses (2R,3S)-3-isopropylmalate = (2S)-2-isopropylmalate. It participates in amino-acid biosynthesis; L-leucine biosynthesis; L-leucine from 3-methyl-2-oxobutanoate: step 2/4. Its function is as follows. Catalyzes the isomerization between 2-isopropylmalate and 3-isopropylmalate, via the formation of 2-isopropylmaleate. The chain is 3-isopropylmalate dehydratase small subunit from Vibrio vulnificus (strain YJ016).